Reading from the N-terminus, the 247-residue chain is MYKWNLPYRKDDVETGREGGERSLYPTMLESPELRWGFIRKVYSIIAFQLLATIAVASTVVFVRPIAVFFATTSAGLALWIVLIITPLIVMCPLYYYHQKHPVNYLLLGIFTVALAFAVGLTCAFTSGKVILEAAILTTVVVLSLTVYTFWAAKKGYDFNFLGPFLFGALIVLMVFALIQIFFPLGRISVMIYGCLAAIIFCGYIVYDTDNLIKRYSYDEYIWAAVSLYLDIINLFLALLTIFRAAE.

A run of 7 helical transmembrane segments spans residues 42-62 (VYSIIAFQLLATIAVASTVVF), 75-95 (AGLALWIVLIITPLIVMCPLY), 105-125 (YLLLGIFTVALAFAVGLTCAF), 130-150 (VILEAAILTTVVVLSLTVYTF), 165-185 (FLFGALIVLMVFALIQIFFPL), 188-208 (ISVMIYGCLAAIIFCGYIVYD), and 222-242 (IWAAVSLYLDIINLFLALLTI).

Belongs to the BI1 family.

The protein resides in the membrane. The sequence is that of Protein LIFEGUARD 4 from Arabidopsis thaliana (Mouse-ear cress).